A 281-amino-acid chain; its full sequence is 39kDa core protein OPG130 (281 aa).

Residues M1 to Y22 show a composition bias toward polar residues. 3 disordered regions span residues M1–K33, I91–D112, and N149–P192. Over residues S24 to K33 the composition is skewed to basic and acidic residues. Polar residues predominate over residues P94–D112. Low complexity predominate over residues T154–S175.

Belongs to the orthopoxvirus OPG130 family. In terms of assembly, interacts with OPG136 and its cleaved form. Post-translationally, its phosphorylation state is regulated by the OPG054 kinase and the OPG106 phosphatase.

It is found in the virion. The protein resides in the host endoplasmic reticulum-Golgi intermediate compartment membrane. In terms of biological role, component of the virion core. Participates in virion assembly. This Vaccinia virus (strain Copenhagen) (VACV) protein is 39kDa core protein OPG130 (OPG130).